We begin with the raw amino-acid sequence, 585 residues long: Pyruvate kinase (585 aa).

Residue Arg-32 coordinates substrate. K(+)-binding residues include Asn-34, Ser-36, Asp-66, and Thr-67. 34–37 (NFSH) serves as a coordination point for ATP. The ATP site is built by Arg-73 and Lys-156. Glu-222 provides a ligand contact to Mg(2+). The substrate site is built by Gly-245, Asp-246, and Thr-278. Asp-246 provides a ligand contact to Mg(2+).

The protein belongs to the pyruvate kinase family. In the C-terminal section; belongs to the PEP-utilizing enzyme family. As to quaternary structure, homotetramer. The cofactor is Mg(2+). Requires K(+) as cofactor.

The catalysed reaction is pyruvate + ATP = phosphoenolpyruvate + ADP + H(+). The protein operates within carbohydrate degradation; glycolysis; pyruvate from D-glyceraldehyde 3-phosphate: step 5/5. The chain is Pyruvate kinase (pyk) from Bacillus licheniformis.